The primary structure comprises 599 residues: Adenine deaminase (599 aa).

Belongs to the metallo-dependent hydrolases superfamily. Adenine deaminase family. Mn(2+) is required as a cofactor.

It carries out the reaction adenine + H2O + H(+) = hypoxanthine + NH4(+). The protein is Adenine deaminase of Clostridium botulinum (strain ATCC 19397 / Type A).